Reading from the N-terminus, the 572-residue chain is Proline--tRNA ligase (572 aa).

Belongs to the class-II aminoacyl-tRNA synthetase family. ProS type 1 subfamily. Homodimer.

Its subcellular location is the cytoplasm. It catalyses the reaction tRNA(Pro) + L-proline + ATP = L-prolyl-tRNA(Pro) + AMP + diphosphate. In terms of biological role, catalyzes the attachment of proline to tRNA(Pro) in a two-step reaction: proline is first activated by ATP to form Pro-AMP and then transferred to the acceptor end of tRNA(Pro). As ProRS can inadvertently accommodate and process non-cognate amino acids such as alanine and cysteine, to avoid such errors it has two additional distinct editing activities against alanine. One activity is designated as 'pretransfer' editing and involves the tRNA(Pro)-independent hydrolysis of activated Ala-AMP. The other activity is designated 'posttransfer' editing and involves deacylation of mischarged Ala-tRNA(Pro). The misacylated Cys-tRNA(Pro) is not edited by ProRS. This is Proline--tRNA ligase from Serratia proteamaculans (strain 568).